The following is a 158-amino-acid chain: NAD(P)H-quinone oxidoreductase subunit J, chloroplastic (158 aa).

It belongs to the complex I 30 kDa subunit family. NDH is composed of at least 16 different subunits, 5 of which are encoded in the nucleus.

The protein resides in the plastid. It is found in the chloroplast thylakoid membrane. The catalysed reaction is a plastoquinone + NADH + (n+1) H(+)(in) = a plastoquinol + NAD(+) + n H(+)(out). The enzyme catalyses a plastoquinone + NADPH + (n+1) H(+)(in) = a plastoquinol + NADP(+) + n H(+)(out). Its function is as follows. NDH shuttles electrons from NAD(P)H:plastoquinone, via FMN and iron-sulfur (Fe-S) centers, to quinones in the photosynthetic chain and possibly in a chloroplast respiratory chain. The immediate electron acceptor for the enzyme in this species is believed to be plastoquinone. Couples the redox reaction to proton translocation, and thus conserves the redox energy in a proton gradient. The polypeptide is NAD(P)H-quinone oxidoreductase subunit J, chloroplastic (Dioscorea elephantipes (Elephant's foot yam)).